The chain runs to 610 residues: Probable galacturonosyltransferase 5 (610 aa).

Topologically, residues methionine 1–arginine 6 are cytoplasmic. Residues tryptophan 7–valine 27 form a helical; Signal-anchor for type II membrane protein membrane-spanning segment. Over serine 28 to aspartate 610 the chain is Lumenal. The span at leucine 86 to glutamate 101 shows a compositional bias: polar residues. Positions leucine 86–alanine 170 are disordered. 2 N-linked (GlcNAc...) asparagine glycosylation sites follow: asparagine 88 and asparagine 94. A compositionally biased stretch (basic and acidic residues) spans glutamate 110–glutamine 123. Over residues alanine 124–alanine 135 the composition is skewed to polar residues. The segment covering isoleucine 139 to alanine 170 has biased composition (basic and acidic residues). N-linked (GlcNAc...) asparagine glycans are attached at residues asparagine 196, asparagine 338, asparagine 401, and asparagine 475.

It belongs to the glycosyltransferase 8 family. Expressed in roots, inflorescences, siliques, leaves and stems.

Its subcellular location is the golgi apparatus membrane. It functions in the pathway glycan metabolism; pectin biosynthesis. Its function is as follows. May be involved in pectin and/or xylans biosynthesis in cell walls. The protein is Probable galacturonosyltransferase 5 (GAUT5) of Arabidopsis thaliana (Mouse-ear cress).